A 730-amino-acid chain; its full sequence is Rap1 GTPase-activating protein 2 (730 aa).

A Rap-GAP domain is found at 247-463 (IVAYDEHEVN…RTRAALLDNL (217 aa)). Disordered stretches follow at residues 510 to 668 (MVGS…STAS) and 698 to 730 (SRSP…STSH). Composition is skewed to polar residues over residues 535-557 (GEVT…QSRS) and 597-612 (HSSQ…NPSS). A compositionally biased stretch (basic and acidic residues) spans 617–630 (PNKDRPFVKLKENG). The segment covering 631 to 651 (RSNISRSSSSTSSFSSTAGES) has biased composition (low complexity). Residues 699–712 (RSPTDIKNRNSPRS) show a composition bias toward polar residues.

The protein localises to the cytoplasm. GTPase activator for the nuclear Ras-related regulatory protein RAP-1A (KREV-1), converting it to the putatively inactive GDP-bound state. This is Rap1 GTPase-activating protein 2 (RAP1GAP2) from Gallus gallus (Chicken).